Consider the following 1111-residue polypeptide: Histone deacetylase 5 (1111 aa).

K35 is covalently cross-linked (Glycyl lysine isopeptide (Lys-Gly) (interchain with G-Cter in SUMO2)). 3 disordered regions span residues 40-63, 107-136, and 187-272; these read GAMPSSMGGGGGGSPSPVELRGAL, RQHEVQLQKHLKQQQEMLAAKRQQELEQQR, and KEPT…SSPL. Basic and acidic residues predominate over residues 238-249; the sequence is DSRDDFPLRKTA. S250 carries the post-translational modification Phosphoserine; by AMPK, CaMK1, SIK1 and PKD/PRKD1. Basic and acidic residues predominate over residues 263 to 272; that stretch reads KVAERRSSPL. A Phosphothreonine; by PKC modification is found at T283. Positions 474–495 are disordered; it reads TVGKLPRHRPLSRTQSSPLPQS. The segment covering 485–495 has biased composition (low complexity); the sequence is SRTQSSPLPQS. The residue at position 489 (S489) is a Phosphoserine; by AMPK, CaMK1, SIK1 and PKD/PRKD1. K524 carries the N6-acetyllysine modification. Disordered stretches follow at residues 527-611 and 645-666; these read TKTG…LEES and LGRTQSSPAAPGSMKSPPDQPT. A compositionally biased stretch (acidic residues) spans 572-610; it reads STQEDLEEEEDEEEEDEDCIQVKDEEGESGPDEGPDLEE. Phosphoserine is present on residues S600 and S650. The tract at residues 671-1017 is histone deacetylase; that stretch reads TTGVVYDTFM…VSALLSVELQ (347 aa). Zn(2+) is bound by residues C685, C687, H693, and C770. Residue H822 is part of the active site. The Nuclear export signal motif lies at 1070–1109; it reads EEAETVSAMALLSVGAEQAQAVATQEHSPRPAEEPMEQEP. Residues 1086–1111 form a disordered region; it reads EQAQAVATQEHSPRPAEEPMEQEPTL. At S1097 the chain carries Phosphoserine.

This sequence belongs to the histone deacetylase family. HD type 2 subfamily. In terms of assembly, interacts with AHRR, BAHD1, BCOR, HDAC7, HDAC9, CTBP1, MEF2C, NCOR2, NRIP1, PHB2 and a 14-3-3 chaperone protein. Interacts with BCL6, DDIT3/CHOP, GRK5, KDM5B and MYOCD. Interacts with EP300 in the presence of TFAP2C. Interacts with ANKRA2. Interacts with CUL7 (as part of the 3M complex); negatively regulated by ANKRA2. Interacts with ZBTB7B; the interaction allows the recruitment of HDAC4 on CD8 loci for deacetylation and possible inhibition of CD8 genes expression. Interacts with RARA. Post-translationally, phosphorylated by AMPK, CaMK1, SIK1 and PRKD1 at Ser-250 and Ser-489. The phosphorylation is required for the export to the cytoplasm and inhibition. Phosphorylated by the PKC kinases PKN1 and PKN2, impairing nuclear import. Phosphorylated by GRK5, leading to nuclear export of HDAC5 and allowing MEF2-mediated transcription. In terms of processing, ubiquitinated. Polyubiquitination however does not lead to its degradation.

The protein localises to the nucleus. It localises to the cytoplasm. It catalyses the reaction N(6)-acetyl-L-lysyl-[histone] + H2O = L-lysyl-[histone] + acetate. Its function is as follows. Responsible for the deacetylation of lysine residues on the N-terminal part of the core histones (H2A, H2B, H3 and H4). Histone deacetylation gives a tag for epigenetic repression and plays an important role in transcriptional regulation, cell cycle progression and developmental events. Histone deacetylases act via the formation of large multiprotein complexes. Involved in muscle maturation by repressing transcription of myocyte enhancer MEF2C. During muscle differentiation, it shuttles into the cytoplasm, allowing the expression of myocyte enhancer factors. Serves as a corepressor of RARA and causes its deacetylation. In association with RARA, plays a role in the repression of microRNA-10a and thereby in the inflammatory response. This is Histone deacetylase 5 (HDAC5) from Cricetulus griseus (Chinese hamster).